Here is a 369-residue protein sequence, read N- to C-terminus: 3-dehydroquinate synthase (369 aa).

Residues Asp-80–Lys-85, Gly-114–Asp-118, Thr-138–Thr-139, Lys-151, Lys-160, and Thr-178–Thr-181 each bind NAD(+). Residues Glu-193, His-256, and His-273 each coordinate Zn(2+).

This sequence belongs to the sugar phosphate cyclases superfamily. Dehydroquinate synthase family. Co(2+) serves as cofactor. The cofactor is Zn(2+). Requires NAD(+) as cofactor.

The protein localises to the cytoplasm. It carries out the reaction 7-phospho-2-dehydro-3-deoxy-D-arabino-heptonate = 3-dehydroquinate + phosphate. The protein operates within metabolic intermediate biosynthesis; chorismate biosynthesis; chorismate from D-erythrose 4-phosphate and phosphoenolpyruvate: step 2/7. Its function is as follows. Catalyzes the conversion of 3-deoxy-D-arabino-heptulosonate 7-phosphate (DAHP) to dehydroquinate (DHQ). In Psychrobacter cryohalolentis (strain ATCC BAA-1226 / DSM 17306 / VKM B-2378 / K5), this protein is 3-dehydroquinate synthase.